A 482-amino-acid chain; its full sequence is uncharacterized protein (482 aa).

2 WD repeats span residues 92–133 and 191–230; these read DMPN…REPI and GHEHNIPCITFNSSGTLLLSGSIDRSLQIWDITSLSCLCK.

It is found in the cytoplasm. The protein resides in the nucleus. This is an uncharacterized protein from Schizosaccharomyces pombe (strain 972 / ATCC 24843) (Fission yeast).